The chain runs to 104 residues: Vacuolar ATPase assembly integral membrane protein VMA21 (104 aa).

Over 1–21 the chain is Cytoplasmic; sequence MSNRVSTGKMAMAPQESVQPA. Residues 22–42 form a helical membrane-spanning segment; the sequence is VLYKLVLFALLMAVVPIGTYF. Over 43–65 the chain is Lumenal; sequence STLNYLWDGASRCGFPSGLCSTT. Residues 66–86 traverse the membrane as a helical segment; it reads FAAISAIAAANLILVGYVVVA. The Cytoplasmic segment spans residues 87 to 104; it reads FREDAASRTGPLPEKKTS. A Prevents secretion from ER motif is present at residues 101 to 104; that stretch reads KKTS.

It belongs to the VMA21 family.

It localises to the endoplasmic reticulum membrane. It is found in the endoplasmic reticulum-Golgi intermediate compartment membrane. Its subcellular location is the cytoplasmic vesicle. The protein localises to the COPII-coated vesicle membrane. Its function is as follows. Required for the assembly of the V0 complex of the vacuolar ATPase (V-ATPase) in the endoplasmic reticulum. This chain is Vacuolar ATPase assembly integral membrane protein VMA21, found in Cryptococcus neoformans var. neoformans serotype D (strain B-3501A) (Filobasidiella neoformans).